Reading from the N-terminus, the 199-residue chain is Adenylate kinase (199 aa).

8 to 13 (GAGKGT) is a binding site for ATP. The NMP stretch occupies residues 28–57 (STGDIFRANIKNKTELGQQVKAIVDAGDYV). AMP contacts are provided by residues Thr-29, Arg-34, 55 to 57 (DYV), 83 to 86 (GYPR), and Gln-90. Residues 124 to 134 (KRAREQGRADD) are LID. Residue Arg-125 coordinates ATP. The AMP site is built by Arg-131 and Arg-142. Gly-170 provides a ligand contact to ATP.

This sequence belongs to the adenylate kinase family. Monomer.

The protein localises to the cytoplasm. It carries out the reaction AMP + ATP = 2 ADP. It functions in the pathway purine metabolism; AMP biosynthesis via salvage pathway; AMP from ADP: step 1/1. Functionally, catalyzes the reversible transfer of the terminal phosphate group between ATP and AMP. Plays an important role in cellular energy homeostasis and in adenine nucleotide metabolism. This Leifsonia xyli subsp. xyli (strain CTCB07) protein is Adenylate kinase.